We begin with the raw amino-acid sequence, 71 residues long: Cold shock-like protein CspB (71 aa).

A CSD domain is found at G7 to V67.

It localises to the cytoplasm. The sequence is that of Cold shock-like protein CspB (cspB) from Escherichia coli (strain K12).